A 1103-amino-acid chain; its full sequence is Coatomer subunit beta (1103 aa).

HEAT repeat units follow at residues 51–89 (EAYTRLLMTVIRYAMPSKDKRVKKLTQLYLEIVGKCRPD), 94–129 (EEMILICNALRNDLMSPNEYVRGSTLRLLSKIRQFK), 130–166 (VLEPLVEAILQNLTHRHSYVRRNAVMCVYSIVKNFGL), 247–284 (QQKAGLLRLIVSILPNTLPSVAYEGACSLLALSRAPVS), 322–359 (RTMEEFVIDLLRGLQTPSLEVRRKILDLVLQIVGKNSV), 365–404 (VLKRELLRTAEPEQLTVPRTMEYRRLLIKAVHSCCTRFPE), and 405–441 (AAASVVNVLIDFPGDPDVTTATEVAVVVRELVATCVH).

Oligomeric complex that consists of at least the alpha, beta, beta', gamma, delta, epsilon and zeta subunits.

It is found in the cytoplasm. The protein localises to the golgi apparatus membrane. Its subcellular location is the cytoplasmic vesicle. The protein resides in the COPI-coated vesicle membrane. In terms of biological role, the coatomer is a cytosolic protein complex that binds to dilysine motifs and reversibly associates with Golgi non-clathrin-coated vesicles, which further mediate biosynthetic protein transport from the ER, via the Golgi up to the trans Golgi network. Coatomer complex is required for budding from Golgi membranes, and is essential for the retrograde Golgi-to-ER transport of dilysine-tagged proteins. In Toxoplasma gondii, this protein is Coatomer subunit beta.